The following is a 282-amino-acid chain: 2-dehydro-3-deoxyphosphooctonate aldolase (282 aa).

Belongs to the KdsA family.

Its subcellular location is the cytoplasm. It catalyses the reaction D-arabinose 5-phosphate + phosphoenolpyruvate + H2O = 3-deoxy-alpha-D-manno-2-octulosonate-8-phosphate + phosphate. Its pathway is carbohydrate biosynthesis; 3-deoxy-D-manno-octulosonate biosynthesis; 3-deoxy-D-manno-octulosonate from D-ribulose 5-phosphate: step 2/3. It functions in the pathway bacterial outer membrane biogenesis; lipopolysaccharide biosynthesis. This Shewanella baltica (strain OS223) protein is 2-dehydro-3-deoxyphosphooctonate aldolase.